The following is a 543-amino-acid chain: Ipecoside beta-D-glucosidase IpeGLU1 (543 aa).

A beta-D-glucoside-binding positions include Q36, H140, 185 to 186, Y350, E422, W471, and F487; that span reads NE. The Proton donor role is filled by E186. The Nucleophile role is filled by E422.

The protein belongs to the glycosyl hydrolase 1 family. As to expression, expressed in roots.

The protein localises to the cytoplasm. It localises to the cytosol. It catalyses the reaction deacetylipecoside + H2O = deacetylipecoside aglycone + D-glucose. The catalysed reaction is deacetylisoipecoside + H2O = deacetylisoipecoside aglycone + D-glucose. The enzyme catalyses 6-O-methyldeacetylipecoside + H2O = 6-O-methyldeacetylipecoside aglycone + D-glucose. It carries out the reaction 6-O-methyldeacetylisoipecoside + H2O = 6-O-methyldeacetylisoipecoside aglycone + D-glucose. It catalyses the reaction ipecoside + H2O = ipecoside aglycone + D-glucose. The catalysed reaction is 3alpha(S)-strictosidine + H2O = strictosidine aglycone + D-glucose. It participates in alkaloid biosynthesis. Its activity is regulated as follows. Inhibited by Cu(2+), Fe(2+) and Zn(2+). Its function is as follows. Beta-glucosidase involved in the biosynthesis of ipecac and benzylisoquinoline monoterpenoid-isoquinoline alkaloids natural products, starting by the condensation of dopamine and secologanin, and including emetine and cephaeline, drugs used both as anti-protozoal (e.g. treatment of ameobiasis) and as emetic agents. In response to pathogen and herbivore attack, triggers the release of toxic ipecoside aglycon to trigger defense responses. Catalyzes deglucosylation both on (1S)-diastereomer and (1R)-diastereomer substrates, including ipecoside, the main alkaloidal glucoside. Also active on N-deacetylisoipecoside, 6-O-methyl-N-deacetylisoipecoside, 6-O-methyl-N-deacetylipecoside and N-deacetylipecoside. The chain is Ipecoside beta-D-glucosidase IpeGLU1 from Carapichea ipecacuanha (Ipecac).